The sequence spans 376 residues: Cobalt-precorrin-5B C(1)-methyltransferase (376 aa).

The tract at residues 353–376 (KGRTTSTPSHQPAPSSFGDRNRRT) is disordered. Polar residues predominate over residues 355 to 366 (RTTSTPSHQPAP).

It belongs to the CbiD family.

The catalysed reaction is Co-precorrin-5B + S-adenosyl-L-methionine = Co-precorrin-6A + S-adenosyl-L-homocysteine. Its pathway is cofactor biosynthesis; adenosylcobalamin biosynthesis; cob(II)yrinate a,c-diamide from sirohydrochlorin (anaerobic route): step 6/10. Its function is as follows. Catalyzes the methylation of C-1 in cobalt-precorrin-5B to form cobalt-precorrin-6A. This Agrobacterium fabrum (strain C58 / ATCC 33970) (Agrobacterium tumefaciens (strain C58)) protein is Cobalt-precorrin-5B C(1)-methyltransferase.